The chain runs to 90 residues: Small ribosomal subunit protein bS16 (90 aa).

Belongs to the bacterial ribosomal protein bS16 family.

This is Small ribosomal subunit protein bS16 from Brevibacillus brevis (strain 47 / JCM 6285 / NBRC 100599).